The primary structure comprises 137 residues: Fluoride-specific ion channel FluC (137 aa).

A run of 4 helical transmembrane segments spans residues 11–31, 42–62, 75–95, and 107–127; these read IAVS…SLWF, GTLF…ALAL, LIAV…LDTF, and GFYW…GIIL. Residues glycine 82 and threonine 85 each coordinate Na(+).

This sequence belongs to the fluoride channel Fluc/FEX (TC 1.A.43) family.

The protein localises to the cell inner membrane. The catalysed reaction is fluoride(in) = fluoride(out). With respect to regulation, na(+) is not transported, but it plays an essential structural role and its presence is essential for fluoride channel function. Functionally, fluoride-specific ion channel. Important for reducing fluoride concentration in the cell, thus reducing its toxicity. The chain is Fluoride-specific ion channel FluC from Trichormus variabilis (strain ATCC 29413 / PCC 7937) (Anabaena variabilis).